An 839-amino-acid chain; its full sequence is Enhancer of polycomb-like protein 1 (839 aa).

Disordered stretches follow at residues 350–379, 393–415, 608–640, and 679–839; these read QKKR…AGSA, GSGS…PSKI, LADR…ISSD, and QQQQ…KVDA. Over residues 608 to 620 the composition is skewed to basic and acidic residues; that stretch reads LADRQKYDRETEP. Residues 621–640 show a composition bias toward polar residues; the sequence is TRQMSSYDKDPSQLNGISSD. Over residues 679–690 the composition is skewed to low complexity; that stretch reads QQQQQQMRNRQQ. Over residues 697 to 713 the composition is skewed to gly residues; that stretch reads PGAGLGGGQGAGGGAGG. The span at 714–730 shows a compositional bias: polar residues; the sequence is SRNNSPAPGTNGPQSKM. The span at 747-786 shows a compositional bias: low complexity; it reads QHQQYQQMQQQQQQQQQQQQQRKMGVAPMNAASAAAAMAA. Residues 828-839 show a composition bias toward basic and acidic residues; the sequence is MKQKSELAKVDA.

Belongs to the enhancer of polycomb family. In terms of assembly, component of the NuA4 histone acetyltransferase complex.

The protein localises to the nucleus. In terms of biological role, component of the NuA4 histone acetyltransferase complex which is involved in transcriptional activation of selected genes principally by acetylation of nucleosomal histone H4 and H2A. The NuA4 complex is also involved in DNA repair. Involved in gene silencing by neighboring heterochromatin, blockage of the silencing spreading along the chromosome, and required for cell cycle progression through G2/M. The chain is Enhancer of polycomb-like protein 1 (EPL1) from Yarrowia lipolytica (strain CLIB 122 / E 150) (Yeast).